Consider the following 366-residue polypeptide: Nodulation protein NolL (366 aa).

9 helical membrane-spanning segments follow: residues 27–47 (FVKG…LVIY), 62–82 (IYMF…SGTI), 98–118 (LLIP…AAFF), 140–160 (FLWA…FNLL), 164–184 (ILCA…IVPL), 212–232 (HKSL…LDWG), 253–273 (VLLM…SLFH), 286–306 (LVAV…GAVF), and 324–344 (IVVA…VLWI).

It belongs to the acyltransferase 3 family.

The protein resides in the cell membrane. Thought to be an acetyltransferase that modifies the fucose of the nod factor. This Sinorhizobium fredii (strain NBRC 101917 / NGR234) protein is Nodulation protein NolL (nolL).